The following is a 266-amino-acid chain: Glucosamine-6-phosphate deaminase (266 aa).

The Proton acceptor; for enolization step role is filled by aspartate 72. Aspartate 141 functions as the For ring-opening step in the catalytic mechanism. Residue histidine 143 is the Proton acceptor; for ring-opening step of the active site. The active-site For ring-opening step is glutamate 148.

Belongs to the glucosamine/galactosamine-6-phosphate isomerase family. NagB subfamily. Homohexamer; trimer of disulfide-linked dimers.

It carries out the reaction alpha-D-glucosamine 6-phosphate + H2O = beta-D-fructose 6-phosphate + NH4(+). It participates in amino-sugar metabolism; N-acetylneuraminate degradation; D-fructose 6-phosphate from N-acetylneuraminate: step 5/5. With respect to regulation, allosterically activated by N-acetylglucosamine 6-phosphate (GlcNAc6P). Functionally, catalyzes the reversible isomerization-deamination of glucosamine 6-phosphate (GlcN6P) to form fructose 6-phosphate (Fru6P) and ammonium ion. This chain is Glucosamine-6-phosphate deaminase, found in Escherichia coli O6:H1 (strain CFT073 / ATCC 700928 / UPEC).